A 606-amino-acid chain; its full sequence is Medium-chain acyl-CoA ligase ACSF2, mitochondrial (606 aa).

A mitochondrion-targeting transit peptide spans 1–13 (MSSKILLTNLRTS). Residues 256-264 (TSGTTGKPK), Asp484, Arg499, and Lys590 each bind ATP.

The protein belongs to the ATP-dependent AMP-binding enzyme family.

It is found in the mitochondrion. The catalysed reaction is a medium-chain fatty acid + ATP + CoA = a medium-chain fatty acyl-CoA + AMP + diphosphate. It catalyses the reaction octanoate + ATP + CoA = octanoyl-CoA + AMP + diphosphate. Functionally, acyl-CoA synthases catalyze the initial reaction in fatty acid metabolism, by forming a thioester with CoA. Has some preference toward medium-chain substrates. Plays a role in adipocyte differentiation. The chain is Medium-chain acyl-CoA ligase ACSF2, mitochondrial from Danio rerio (Zebrafish).